A 238-amino-acid chain; its full sequence is tRNA (guanine-N(7)-)-methyltransferase (238 aa).

S-adenosyl-L-methionine is bound by residues Glu-68, Glu-93, Asp-120, and Asp-143. Asp-143 is a catalytic residue. Residues Lys-147, Asp-179, and 216–219 contribute to the substrate site; that span reads TKFE.

The protein belongs to the class I-like SAM-binding methyltransferase superfamily. TrmB family.

It catalyses the reaction guanosine(46) in tRNA + S-adenosyl-L-methionine = N(7)-methylguanosine(46) in tRNA + S-adenosyl-L-homocysteine. It functions in the pathway tRNA modification; N(7)-methylguanine-tRNA biosynthesis. Catalyzes the formation of N(7)-methylguanine at position 46 (m7G46) in tRNA. In Shewanella putrefaciens (strain CN-32 / ATCC BAA-453), this protein is tRNA (guanine-N(7)-)-methyltransferase.